A 1024-amino-acid chain; its full sequence is Isoleucine--tRNA ligase (1024 aa).

The 'HIGH' region motif lies at 52–62 (PTANGRPHVGH). The 'KMSKS' region signature appears at 590 to 594 (KMSKS). Position 593 (lysine 593) interacts with ATP.

The protein belongs to the class-I aminoacyl-tRNA synthetase family. IleS type 2 subfamily. As to quaternary structure, monomer. Zn(2+) serves as cofactor.

The protein localises to the cytoplasm. It catalyses the reaction tRNA(Ile) + L-isoleucine + ATP = L-isoleucyl-tRNA(Ile) + AMP + diphosphate. In terms of biological role, catalyzes the attachment of isoleucine to tRNA(Ile). As IleRS can inadvertently accommodate and process structurally similar amino acids such as valine, to avoid such errors it has two additional distinct tRNA(Ile)-dependent editing activities. One activity is designated as 'pretransfer' editing and involves the hydrolysis of activated Val-AMP. The other activity is designated 'posttransfer' editing and involves deacylation of mischarged Val-tRNA(Ile). The polypeptide is Isoleucine--tRNA ligase (Picrophilus torridus (strain ATCC 700027 / DSM 9790 / JCM 10055 / NBRC 100828 / KAW 2/3)).